The following is a 599-amino-acid chain: Elongation factor 4 (599 aa).

Residues 5 to 187 (SHIRNFSIIA…RLVHTIPAPV (183 aa)) form the tr-type G domain. GTP-binding positions include 17–22 (DHGKST) and 134–137 (NKMD).

It belongs to the TRAFAC class translation factor GTPase superfamily. Classic translation factor GTPase family. LepA subfamily.

The protein localises to the cell inner membrane. The catalysed reaction is GTP + H2O = GDP + phosphate + H(+). Its function is as follows. Required for accurate and efficient protein synthesis under certain stress conditions. May act as a fidelity factor of the translation reaction, by catalyzing a one-codon backward translocation of tRNAs on improperly translocated ribosomes. Back-translocation proceeds from a post-translocation (POST) complex to a pre-translocation (PRE) complex, thus giving elongation factor G a second chance to translocate the tRNAs correctly. Binds to ribosomes in a GTP-dependent manner. This is Elongation factor 4 from Pseudomonas putida (strain W619).